The chain runs to 301 residues: Probable alpha-L-glutamate ligase (301 aa).

Residues 104–287 form the ATP-grasp domain; the sequence is LQLLSRKGVG…IAGMVIDFIE (184 aa). ATP is bound by residues K141, 178–179, D187, and 211–213; these read EY and RSN. Positions 248, 260, and 262 each coordinate Mg(2+). D248, E260, and N262 together coordinate Mn(2+).

This sequence belongs to the RimK family. The cofactor is Mg(2+). Requires Mn(2+) as cofactor.

The sequence is that of Probable alpha-L-glutamate ligase from Pseudoalteromonas translucida (strain TAC 125).